An 81-amino-acid polypeptide reads, in one-letter code: Large ribosomal subunit protein bL31B (81 aa).

Belongs to the bacterial ribosomal protein bL31 family. Type B subfamily. Part of the 50S ribosomal subunit.

The sequence is that of Large ribosomal subunit protein bL31B (rpmE2) from Lactiplantibacillus plantarum (strain ATCC BAA-793 / NCIMB 8826 / WCFS1) (Lactobacillus plantarum).